The chain runs to 446 residues: NADH oxidase (446 aa).

Residues 7-11, Glu-32, Cys-42, Val-79, 110-113, Lys-132, and Tyr-157 contribute to the FAD site; these read GCTHA and TTGS. The active-site Proton acceptor is the His-10. Cys-42 acts as the Redox-active in catalysis. The residue at position 42 (Cys-42) is a Cysteine sulfinic acid (-SO2H). NAD(+) contacts are provided by residues 150–165, Asp-177, Tyr-186, and Gly-243; that span reads VVVV…LVEA. Residues 271-281, Leu-298, Ala-299, and Thr-300 contribute to the FAD site; that span reads TSNPDIFAAGD. Gly-328 serves as a coordination point for NAD(+). Phe-424 serves as a coordination point for FAD.

It belongs to the class-III pyridine nucleotide-disulfide oxidoreductase family. In terms of assembly, homodimer. FAD is required as a cofactor. In terms of processing, the N-terminus is blocked.

It catalyses the reaction 2 NADH + O2 + 2 H(+) = 2 NAD(+) + 2 H2O. In terms of biological role, catalyzes the four-electron reduction of molecular oxygen to water. The chain is NADH oxidase (nox) from Enterococcus faecalis (strain ATCC 700802 / V583).